The chain runs to 458 residues: Protein adenylyltransferase FICD (458 aa).

The Cytoplasmic portion of the chain corresponds to 1–23; sequence MILMPMASVVAVAEPKWVSVWGR. A helical; Signal-anchor for type II membrane protein transmembrane segment spans residues 24–44; the sequence is FLWMALLSMALGSLLALLLPL. The Lumenal segment spans residues 45–458; it reads GVVEEHCLAV…GFKETLPVRP (414 aa). The residue at position 80 (threonine 80) is an O-AMP-threonine; by autocatalysis. TPR repeat units follow at residues 106–139 and 140–173; these read AKAA…DPGF and VDAL…SPFH. Threonine 183 is subject to O-AMP-threonine; by autocatalysis. Positions 230–235 match the Inhibitory (S/T)XXXE(G/N) motif motif; it reads TVAIEG. Glutamate 234 is a binding site for ATP. Asparagine 275 carries an N-linked (GlcNAc...) asparagine glycan. A Fido domain is found at 285 to 420; sequence VTMDDMLEIH…VRPFIRFIAK (136 aa). 316-319 is a binding site for ATP; that stretch reads VGHH. Histidine 363 is a catalytic residue. ATP is bound by residues 367–374, 399–400, and asparagine 407; these read DGNGRTSR and YY.

Belongs to the fic family. As to quaternary structure, homodimer. Interacts with HD. It depends on Mg(2+) as a cofactor. Requires Mn(2+) as cofactor. In terms of processing, auto-AMPylated in vitro.

The protein resides in the endoplasmic reticulum membrane. The enzyme catalyses L-tyrosyl-[protein] + ATP = O-(5'-adenylyl)-L-tyrosyl-[protein] + diphosphate. It carries out the reaction 3-O-(5'-adenylyl)-L-threonyl-[protein] + H2O = L-threonyl-[protein] + AMP + H(+). The catalysed reaction is L-threonyl-[protein] + ATP = 3-O-(5'-adenylyl)-L-threonyl-[protein] + diphosphate. With respect to regulation, the side chain of Glu-234 determines which of the two opposing activities (AMPylase or de-AMPylase) will take place. In response to endoplasmic reticulum stress, mediates de-AMPylase activity. Adenylyltransferase activity is inhibited by the inhibitory helix present at the N-terminus: Glu-234 binds ATP and competes with ATP-binding at Arg-374, thereby preventing adenylyltransferase activity. In unstressed cells, disengagement of Glu-234 promotes adenylyltransferase activity. Activation dissociates ATP-binding from Glu-234, allowing ordered binding of the entire ATP moiety with the alpha-phosphate in an orientation that is productive for accepting an incoming target hydroxyl side chain. In terms of biological role, protein that can both mediate the addition of adenosine 5'-monophosphate (AMP) to specific residues of target proteins (AMPylation), and the removal of the same modification from target proteins (de-AMPylation), depending on the context. The side chain of Glu-231 determines which of the two opposing activities (AMPylase or de-AMPylase) will take place. Acts as a key regulator of the ERN1/IRE1-mediated unfolded protein response (UPR) by mediating AMPylation or de-AMPylation of HSPA5/BiP. In unstressed cells, acts as an adenylyltransferase by mediating AMPylation of HSPA5/BiP at 'Thr-518', thereby inactivating it. In response to endoplasmic reticulum stress, acts as a phosphodiesterase by mediating removal of ATP (de-AMPylation) from HSPA5/BiP at 'Thr-518', leading to restore HSPA5/BiP activity. Although it is able to AMPylate RhoA, Rac and Cdc42 Rho GTPases in vitro, Rho GTPases do not constitute physiological substrates. The chain is Protein adenylyltransferase FICD from Mus musculus (Mouse).